The following is a 674-amino-acid chain: DNA ligase (674 aa).

NAD(+) is bound by residues D35–D39, S82–L83, and E116. K118 acts as the N6-AMP-lysine intermediate in catalysis. Residues R139, E174, K282, and K306 each coordinate NAD(+). Residues C400, C403, C418, and C424 each contribute to the Zn(2+) site. Residues S593–V674 enclose the BRCT domain.

Belongs to the NAD-dependent DNA ligase family. LigA subfamily. The cofactor is Mg(2+). Mn(2+) is required as a cofactor.

It catalyses the reaction NAD(+) + (deoxyribonucleotide)n-3'-hydroxyl + 5'-phospho-(deoxyribonucleotide)m = (deoxyribonucleotide)n+m + AMP + beta-nicotinamide D-nucleotide.. In terms of biological role, DNA ligase that catalyzes the formation of phosphodiester linkages between 5'-phosphoryl and 3'-hydroxyl groups in double-stranded DNA using NAD as a coenzyme and as the energy source for the reaction. It is essential for DNA replication and repair of damaged DNA. This Ehrlichia ruminantium (strain Welgevonden) protein is DNA ligase.